The sequence spans 117 residues: S-adenosylmethionine decarboxylase proenzyme (117 aa).

The active-site Schiff-base intermediate with substrate; via pyruvic acid is S63. S63 bears the Pyruvic acid (Ser); by autocatalysis mark. The active-site Proton acceptor; for processing activity is H68. C83 serves as the catalytic Proton donor; for catalytic activity.

This sequence belongs to the prokaryotic AdoMetDC family. Type 1 subfamily. As to quaternary structure, heterotetramer of two alpha and two beta chains arranged as a dimer of alpha/beta heterodimers. Pyruvate is required as a cofactor. Is synthesized initially as an inactive proenzyme. Formation of the active enzyme involves a self-maturation process in which the active site pyruvoyl group is generated from an internal serine residue via an autocatalytic post-translational modification. Two non-identical subunits are generated from the proenzyme in this reaction, and the pyruvate is formed at the N-terminus of the alpha chain, which is derived from the carboxyl end of the proenzyme. The post-translation cleavage follows an unusual pathway, termed non-hydrolytic serinolysis, in which the side chain hydroxyl group of the serine supplies its oxygen atom to form the C-terminus of the beta chain, while the remainder of the serine residue undergoes an oxidative deamination to produce ammonia and the pyruvoyl group blocking the N-terminus of the alpha chain.

It carries out the reaction S-adenosyl-L-methionine + H(+) = S-adenosyl 3-(methylsulfanyl)propylamine + CO2. The protein operates within amine and polyamine biosynthesis; S-adenosylmethioninamine biosynthesis; S-adenosylmethioninamine from S-adenosyl-L-methionine: step 1/1. Its function is as follows. Catalyzes the decarboxylation of S-adenosylmethionine to S-adenosylmethioninamine (dcAdoMet), the propylamine donor required for the synthesis of the polyamines spermine and spermidine from the diamine putrescine. This is S-adenosylmethionine decarboxylase proenzyme from Methanococcus aeolicus (strain ATCC BAA-1280 / DSM 17508 / OCM 812 / Nankai-3).